A 431-amino-acid polypeptide reads, in one-letter code: Growth-regulating factor 9 (431 aa).

The region spanning 24–59 is the QLQ domain; it reads WMKAAQLMEFRMQALVYRYIEAGLRVPHHLVVPIWN. 2 consecutive WRC domains span residues 89 to 133 and 307 to 351; these read ETEP…LVES and DNEP…VDTT. 4 short sequence motifs (bipartite nuclear localization signal) span residues 94–104, 122–129, 312–322, and 340–345; these read RCRRTDGKKWR, RGRKRSRK, and RGMKKK.

This sequence belongs to the GRF family. Interacts with GIF1. As to expression, detected in the shoot apical meristem (SAM) and in young leaf primordium.

It is found in the nucleus. Its function is as follows. Transcription activator that plays a role in the regulation of cell expansion in leaf and cotyledons tissues. Component of a network formed by miR396, the GRFs and their interacting factors (GIFs) acting in the regulation of meristem function, at least partially through the control of cell proliferation. The polypeptide is Growth-regulating factor 9 (GRF9) (Arabidopsis thaliana (Mouse-ear cress)).